The primary structure comprises 198 residues: Recombination protein RecR (198 aa).

The segment at 57–72 (CSSCGHITDKDPCYIC) adopts a C4-type zinc-finger fold. Positions 80–175 (SIICVVQDPK…KITRIAHGLP (96 aa)) constitute a Toprim domain.

This sequence belongs to the RecR family.

May play a role in DNA repair. It seems to be involved in an RecBC-independent recombinational process of DNA repair. It may act with RecF and RecO. The polypeptide is Recombination protein RecR (Anoxybacillus flavithermus (strain DSM 21510 / WK1)).